Here is a 187-residue protein sequence, read N- to C-terminus: Transcriptional repressor NrdR (187 aa).

A zinc finger lies at 3 to 34 (CPFCRHPDSRVVDSRTTDDGTSIRRRRQCPDC). The region spanning 46–136 (LMVVKRSGVT…VYRAFDSLED (91 aa)) is the ATP-cone domain. The interval 146–187 (EEQRERPAVDDEDHEDAGAERQGTDRGSGGTVEVPVPATVAD) is disordered.

This sequence belongs to the NrdR family. Requires Zn(2+) as cofactor.

Its function is as follows. Negatively regulates transcription of bacterial ribonucleotide reductase nrd genes and operons by binding to NrdR-boxes. This Streptomyces avermitilis (strain ATCC 31267 / DSM 46492 / JCM 5070 / NBRC 14893 / NCIMB 12804 / NRRL 8165 / MA-4680) protein is Transcriptional repressor NrdR.